The primary structure comprises 83 residues: Beta-defensin 119 (83 aa).

A signal peptide spans 1 to 20 (MKFLFLFLAILLAMEPVVSG). Cystine bridges form between Cys27-Cys54, Cys34-Cys48, and Cys38-Cys55.

Belongs to the beta-defensin family.

It localises to the secreted. Has antibacterial activity. The chain is Beta-defensin 119 (DEFB119) from Bos taurus (Bovine).